A 132-amino-acid chain; its full sequence is Phosphoribosyl-AMP cyclohydrolase (132 aa).

Aspartate 86 contacts Mg(2+). Cysteine 87 provides a ligand contact to Zn(2+). Mg(2+) is bound by residues aspartate 88 and aspartate 90. Positions 103 and 110 each coordinate Zn(2+).

The protein belongs to the PRA-CH family. Homodimer. It depends on Mg(2+) as a cofactor. The cofactor is Zn(2+).

It localises to the cytoplasm. The enzyme catalyses 1-(5-phospho-beta-D-ribosyl)-5'-AMP + H2O = 1-(5-phospho-beta-D-ribosyl)-5-[(5-phospho-beta-D-ribosylamino)methylideneamino]imidazole-4-carboxamide. Its pathway is amino-acid biosynthesis; L-histidine biosynthesis; L-histidine from 5-phospho-alpha-D-ribose 1-diphosphate: step 3/9. Catalyzes the hydrolysis of the adenine ring of phosphoribosyl-AMP. This is Phosphoribosyl-AMP cyclohydrolase from Clavibacter michiganensis subsp. michiganensis (strain NCPPB 382).